The primary structure comprises 57 residues: Probable antitoxin MazE1 (57 aa).

As to quaternary structure, forms a complex with cognate toxin MazF1.

Antitoxin component of a type II toxin-antitoxin (TA) system. This chain is Probable antitoxin MazE1 (mazE1), found in Mycobacterium tuberculosis (strain ATCC 25618 / H37Rv).